The primary structure comprises 148 residues: uncharacterized protein (148 aa).

Over residues 97-112 (KKLDEQRMPGKPKNTE) the composition is skewed to basic and acidic residues. The disordered stretch occupies residues 97-126 (KKLDEQRMPGKPKNTEGSKSTIRKKANVGN).

This is an uncharacterized protein from Caenorhabditis elegans.